The following is a 731-amino-acid chain: Catalase-peroxidase (731 aa).

A cross-link (tryptophyl-tyrosyl-methioninium (Trp-Tyr) (with M-254)) is located at residues 98-227; the sequence is WHAAGTYRTA…LAAIQMGLIY (130 aa). Catalysis depends on H99, which acts as the Proton acceptor. A cross-link (tryptophyl-tyrosyl-methioninium (Tyr-Met) (with W-98)) is located at residues 227–254; it reads YVNPEGPQGNPHDDEGMARDMKETFKRM. H269 provides a ligand contact to heme b.

It belongs to the peroxidase family. Peroxidase/catalase subfamily. As to quaternary structure, homodimer or homotetramer. Requires heme b as cofactor. Post-translationally, formation of the three residue Trp-Tyr-Met cross-link is important for the catalase, but not the peroxidase activity of the enzyme.

The catalysed reaction is H2O2 + AH2 = A + 2 H2O. It catalyses the reaction 2 H2O2 = O2 + 2 H2O. Its function is as follows. Bifunctional enzyme with both catalase and broad-spectrum peroxidase activity. This Sphingopyxis alaskensis (strain DSM 13593 / LMG 18877 / RB2256) (Sphingomonas alaskensis) protein is Catalase-peroxidase.